Here is a 621-residue protein sequence, read N- to C-terminus: UvrABC system protein C (621 aa).

One can recognise a GIY-YIG domain in the interval 20–98 (TAPGVYRMYA…IKSLTPRYNV (79 aa)). A UVR domain is found at 207-242 (DLLAEELIQAMQVASEHLEFEQAARLRDLLTSLRSM).

It belongs to the UvrC family. In terms of assembly, interacts with UvrB in an incision complex.

It localises to the cytoplasm. Its function is as follows. The UvrABC repair system catalyzes the recognition and processing of DNA lesions. UvrC both incises the 5' and 3' sides of the lesion. The N-terminal half is responsible for the 3' incision and the C-terminal half is responsible for the 5' incision. This Xylella fastidiosa (strain Temecula1 / ATCC 700964) protein is UvrABC system protein C.